The chain runs to 292 residues: Tyrosine isonitrile desaturase (292 aa).

3 residues coordinate Fe cation: histidine 110, aspartate 112, and histidine 259.

Belongs to the TfdA dioxygenase family. The cofactor is Fe(2+).

It catalyses the reaction (2S)-3-(4-hydroxyphenyl)-2-isocyanopropanoate + 2-oxoglutarate + O2 = (2E)-3-(4-hydroxyphenyl)-2-isocyanoprop-2-enoate + succinate + CO2 + H2O. Its function is as follows. Catalyzes the 2-oxoglutarate-dependent oxidation of tyrosine isonitrile. In Erwinia amylovora (strain CFBP1430), this protein is Tyrosine isonitrile desaturase.